Reading from the N-terminus, the 571-residue chain is MTRISRSAYAEIYGPTVVGGVGDRVRLADTLLLAEVEKDHTIFGEEVKFGGGKVIRDGMGQSQRLATDCVDTVITNALIIDAVTGIVKADIGIKDGLISGIGKAGNPDTQPGVTIIIGASTEVVAGEGLIVTAGAIDTHIHFICPQQIEEALATGTTTMIGGGTGPATGSLATTSTSGPWHMAAMLQALDAFPVNVGLFGKGSSSSHGALLEQVRAGAMGLKIHEDWASTPASIDTCLNVAEETDIQVAIHSDTLNESGFVEDTFAAFKGRTIHSFHTEGAGGGHAPDIIRAAGMPNVLPASTNPTMPFTRNTIDEHLDMVMVCHHLDPSIAEDLAFAESRIRRETIAAEDILHDLGAFSIMSSDSQAMGRVGEIVLRTWQTAHKMKLQRGPLQGDSERSDNERIKRYIAKYTINPAVAHGIAHLVGSVEVGKLADLVLWKPAFFGVKVNMVLKSGMAVSASIGDMGASISTPQPVQIRPMWGSHGKALRTSVAFVSQVSLSNPAVSELGLNKRLEAVRGCRGVTKHDMVRNNWLPAISVDPQTYQVYADGQLLRCEALAELPMAQRYFLF.

One can recognise a Urease domain in the interval 134 to 571 (GAIDTHIHFI…LPMAQRYFLF (438 aa)). Ni(2+) contacts are provided by His-139, His-141, and Lys-222. N6-carboxylysine is present on Lys-222. His-224 contributes to the substrate binding site. 2 residues coordinate Ni(2+): His-251 and His-277. The active-site Proton donor is the His-325. A Ni(2+)-binding site is contributed by Asp-365.

The protein belongs to the metallo-dependent hydrolases superfamily. Urease alpha subunit family. Heterotrimer of UreA (gamma), UreB (beta) and UreC (alpha) subunits. Three heterotrimers associate to form the active enzyme. Ni cation serves as cofactor. Carboxylation allows a single lysine to coordinate two nickel ions.

The protein localises to the cytoplasm. The enzyme catalyses urea + 2 H2O + H(+) = hydrogencarbonate + 2 NH4(+). Its pathway is nitrogen metabolism; urea degradation; CO(2) and NH(3) from urea (urease route): step 1/1. The polypeptide is Urease subunit alpha (Bordetella pertussis (strain Tohama I / ATCC BAA-589 / NCTC 13251)).